Consider the following 747-residue polypeptide: Photosystem I P700 chlorophyll a apoprotein A2 (747 aa).

A run of 8 helical transmembrane segments spans residues 46–69 (LFATHFGHLAIIGLWVAGNLFHIA), 135–158 (LFQGAIFLNILVCWLLFAGWLHLQ), 175–199 (LNHHLAVLFGFSSIAWTGHLVHVAI), 273–291 (IAHHHLAIGVMFIIAGHMY), 341–364 (LHFQLGLALASLGAACSLVAQHMG), 380–406 (SALYTHHQYIAMFLMVGAFSHGAIFFV), 428–450 (ALISHLSWVTMLLGFHTLGIYVH), and 530–548 (FLVHHAIALGLHTTALILI). Positions 572 and 581 each coordinate [4Fe-4S] cluster. 2 helical membrane-spanning segments follow: residues 588 to 609 (ATYLAMFWALNTIAWITFYWHW) and 656 to 678 (LSPWAWMFLFGHLIWATGFMFLI). Divinyl chlorophyll a is bound by residues His-667, Met-675, and Tyr-683. Trp-684 is a binding site for phylloquinone. A helical transmembrane segment spans residues 720–740 (LVGLTHFTVGNFVTFGAFVIA).

The protein belongs to the PsaA/PsaB family. In terms of assembly, the PsaA/B heterodimer binds the P700 divinyl chlorophyll special pair and subsequent electron acceptors. PSI consists of a core antenna complex that captures photons, and an electron transfer chain that converts photonic excitation into a charge separation. The cyanobacterial PSI reaction center is composed of one copy each of PsaA,B,C,D,E,F,I,J,K,L,M and X, and forms trimeric complexes. PSI electron transfer chain: 5 divinyl chlorophyll a, 1 divinyl chlorophyll a', 2 phylloquinones and 3 4Fe-4S clusters. PSI core antenna: 90 divinyl chlorophyll a, 22 carotenoids, 3 phospholipids and 1 galactolipid. P700 is a divinyl chlorophyll a/divinyl chlorophyll a' dimer, A0 is one or more divinyl chlorophyll a, A1 is one or both phylloquinones and FX is a shared 4Fe-4S iron-sulfur center. serves as cofactor.

It is found in the cellular thylakoid membrane. The catalysed reaction is reduced [plastocyanin] + hnu + oxidized [2Fe-2S]-[ferredoxin] = oxidized [plastocyanin] + reduced [2Fe-2S]-[ferredoxin]. In terms of biological role, psaA and PsaB bind P700, the primary electron donor of photosystem I (PSI), as well as the electron acceptors A0, A1 and FX. PSI is a plastocyanin/cytochrome c6-ferredoxin oxidoreductase, converting photonic excitation into a charge separation, which transfers an electron from the donor P700 chlorophyll pair to the spectroscopically characterized acceptors A0, A1, FX, FA and FB in turn. Oxidized P700 is reduced on the lumenal side of the thylakoid membrane by plastocyanin or cytochrome c6. This chain is Photosystem I P700 chlorophyll a apoprotein A2, found in Prochlorococcus marinus (strain SARG / CCMP1375 / SS120).